The chain runs to 382 residues: Small ribosomal subunit protein bS1 homolog (382 aa).

S1 motif domains lie at 18–85 (GDVV…LSKR), 103–168 (GHVF…LSHK), 189–257 (GDVV…LSIK), and 274–343 (GDIR…LSIK). Serine 244 is modified (phosphoserine).

This sequence belongs to the bacterial ribosomal protein bS1 family.

The sequence is that of Small ribosomal subunit protein bS1 homolog from Bacillus cereus (strain ATCC 10987 / NRS 248).